A 404-amino-acid chain; its full sequence is MYFLNQLIFQDVSVMSVDKREDMSRSFQKCLNLRYPIIQAPMAGVTTIEMAAKACIAGAIASLPLSHLDFRKVNDIEKLKLMVSQFRDQVADESLEGNLNLNFFCHDIVDKPTDLQTANWAKLYRKSMNVPIDMNEIKFDNGNVSFKAFEKENALQDFFQYLSDGFRPKIISFHFGHPSKSTIEYLQKIGILIFVTATSVREVRLLARLGINGIVCQGYEAGGHRGNFLVNDPKDDENLSTVQLVKRTVDELAEMKNKGLIHATPFVIAAGGIMDSKDISYMLSQQADAVQVGTAFLGCSESNASKNFSSPFTRETTTKMVNIISGKPARTISTPFIEKVIANFQGEELPPYGYMYSAFKQVRKKYPELANFILAGQGFQNVQSGITTDKKIETMGARLKIDGK.

41–43 (PMA) is a binding site for FMN. Catalysis depends on His-224, which acts as the Proton acceptor. His-224 serves as a coordination point for substrate. FMN-binding positions include 270-272 (AGG) and 293-294 (GT).

This sequence belongs to the nitronate monooxygenase family. NMO class I subfamily. The cofactor is FMN.

Its subcellular location is the cytoplasm. It catalyses the reaction ethylnitronate + O2 = chemical entity + acetaldehyde + nitrite + H(+). Functionally, catalyzes the oxidation of alkyl nitronates to produce the corresponding carbonyl compounds and nitrites. This Saccharomyces cerevisiae (strain ATCC 204508 / S288c) (Baker's yeast) protein is Putative nitronate monooxygenase.